We begin with the raw amino-acid sequence, 455 residues long: Pup--protein ligase (455 aa).

Glu-10 provides a ligand contact to Mg(2+). An ATP-binding site is contributed by Arg-55. Tyr-57 contacts Mg(2+). The Proton acceptor role is filled by Asp-59. Glu-65 contacts Mg(2+). Thr-68 and Trp-422 together coordinate ATP.

This sequence belongs to the Pup ligase/Pup deamidase family. Pup-conjugating enzyme subfamily.

It catalyses the reaction ATP + [prokaryotic ubiquitin-like protein]-L-glutamate + [protein]-L-lysine = ADP + phosphate + N(6)-([prokaryotic ubiquitin-like protein]-gamma-L-glutamyl)-[protein]-L-lysine.. Its pathway is protein degradation; proteasomal Pup-dependent pathway. It participates in protein modification; protein pupylation. Its function is as follows. Catalyzes the covalent attachment of the prokaryotic ubiquitin-like protein modifier Pup to the proteasomal substrate proteins, thereby targeting them for proteasomal degradation. This tagging system is termed pupylation. The ligation reaction involves the side-chain carboxylate of the C-terminal glutamate of Pup and the side-chain amino group of a substrate lysine. This is Pup--protein ligase from Sanguibacter keddieii (strain ATCC 51767 / DSM 10542 / NCFB 3025 / ST-74).